Here is a 505-residue protein sequence, read N- to C-terminus: Glycerol kinase (505 aa).

Threonine 14 provides a ligand contact to ADP. Threonine 14, threonine 15, and serine 16 together coordinate ATP. Sn-glycerol 3-phosphate is bound at residue threonine 14. Position 18 (arginine 18) interacts with ADP. Sn-glycerol 3-phosphate contacts are provided by arginine 84, glutamate 85, tyrosine 136, and aspartate 246. Positions 84, 85, 136, 246, and 247 each coordinate glycerol. The ADP site is built by threonine 268 and glycine 311. Threonine 268, glycine 311, glutamine 315, and glycine 412 together coordinate ATP. Positions 412 and 416 each coordinate ADP.

Belongs to the FGGY kinase family.

It catalyses the reaction glycerol + ATP = sn-glycerol 3-phosphate + ADP + H(+). It functions in the pathway polyol metabolism; glycerol degradation via glycerol kinase pathway; sn-glycerol 3-phosphate from glycerol: step 1/1. With respect to regulation, inhibited by fructose 1,6-bisphosphate (FBP). Functionally, key enzyme in the regulation of glycerol uptake and metabolism. Catalyzes the phosphorylation of glycerol to yield sn-glycerol 3-phosphate. This is Glycerol kinase from Vibrio cholerae serotype O1 (strain ATCC 39315 / El Tor Inaba N16961).